We begin with the raw amino-acid sequence, 393 residues long: Sialyltransferase-like protein 1 (393 aa).

At 1–8 the chain is on the cytoplasmic side; that stretch reads MKRPLRRP. Residues 9–27 traverse the membrane as a helical; Signal-anchor for type II membrane protein segment; sequence FAVLLFVVLCAAASFPSVL. Topologically, residues 28 to 393 are lumenal; it reads RRSVGPAPVL…IAVPPVVFYH (366 aa). Residues N49, N212, and N258 are each glycosylated (N-linked (GlcNAc...) asparagine).

It belongs to the glycosyltransferase 29 family.

The protein localises to the golgi apparatus membrane. Functionally, possesses sialyltransferase-like activity in vitro. Transfers sialic acid to the oligosaccharide Gal-beta-1,3-GalNAc and to glycoproteins such as asialofetuin, alpha-1-acid glycoprotein (NeuAc-alpha-2,3-Gal-beta-1,3-GalNAc-) and andasialo-alpha-1-acid glycoprotein. The transferred sialic acid is linked to galactose of Gal-beta-1,3-GalNAc through alpha-2,6-linkage. The sequence is that of Sialyltransferase-like protein 1 from Oryza sativa subsp. indica (Rice).